A 1381-amino-acid polypeptide reads, in one-letter code: Protein HEG homolog 1 (1381 aa).

The first 29 residues, 1–29 (MASPRASRWPPPLLLLLLPLLLLPPAAPG), serve as a signal peptide directing secretion. The tract at residues 24 to 108 (PPAAPGTRDP…APRGGSADAA (85 aa)) is disordered. The span at 25–37 (PAAPGTRDPPPSP) shows a compositional bias: pro residues. The Extracellular segment spans residues 30 to 1248 (TRDPPPSPAR…GLNCGNPYQL (1219 aa)). Over residues 38–52 (ARRALSLAPLAGAGL) the composition is skewed to low complexity. The span at 55-74 (QLERRPEREPPPTPPRERRG) shows a compositional bias: basic and acidic residues. The O-linked (GalNAc...) threonine glycan is linked to threonine 67. The segment covering 93–105 (RGPSGRAPRGGSA) has biased composition (low complexity). N-linked (GlcNAc...) asparagine glycans are attached at residues asparagine 123, asparagine 159, asparagine 180, and asparagine 314. Positions 301 to 316 (DLSSSSESTEKLNNST) are enriched in low complexity. 2 disordered regions span residues 301–325 (DLSS…SVSQ) and 376–447 (PSAV…RSVA). Over residues 424-444 (LASSSEVQNGSPMSQTETVSR) the composition is skewed to polar residues. 3 N-linked (GlcNAc...) asparagine glycosylation sites follow: asparagine 462, asparagine 520, and asparagine 610. Residues 491 to 529 (STVQSGGSHTALGDRSYSESSSTSSSESLNSSAPRGERS) form a disordered region. Low complexity predominate over residues 508–522 (SESSSTSSSESLNSS). Disordered regions lie at residues 612–680 (SSYD…PLPS), 706–757 (SDAS…PVTS), and 774–830 (QTAD…TLPA). A compositionally biased stretch (polar residues) spans 620-648 (QPSTESPVLHTSNLPSYTPTINMPNTSVV). Low complexity-rich tracts occupy residues 657 to 680 (SDSS…PLPS) and 706 to 748 (SDAS…PVLP). Polar residues-rich tracts occupy residues 774–784 (QTADLKSQSTP) and 792–809 (ESKS…TKAV). A compositionally biased stretch (low complexity) spans 810-825 (TTNSPLPPSLTESSTE). Positions 985–1023 (SVNSCAVNPCLHNGECVADNTSRGYHCRCPPSWQGDDCS) constitute an EGF-like 1 domain. 6 cysteine pairs are disulfide-bonded: cysteine 989-cysteine 1000, cysteine 994-cysteine 1011, cysteine 1013-cysteine 1022, cysteine 1029-cysteine 1040, cysteine 1034-cysteine 1049, and cysteine 1051-cysteine 1062. The 39-residue stretch at 1025-1063 (DVNECLSNPCPSTAMCNNTQGSFICKCPVGYQLEKGICN) folds into the EGF-like 2; calcium-binding domain. Asparagine 1137 carries N-linked (GlcNAc...) asparagine glycosylation. Residues 1249 to 1269 (ITVVIAAAGGGLLLILGIALI) form a helical membrane-spanning segment. Topologically, residues 1270–1381 (VTCCRKNKND…SDESRRRDYF (112 aa)) are cytoplasmic. At serine 1359 the chain carries Phosphoserine.

Interacts with CCM2 and KRIT1; KRIT1 markedly facilitates interaction with CCM2.

The protein localises to the cell membrane. The protein resides in the cell junction. Its subcellular location is the secreted. Functionally, receptor component of the CCM signaling pathway which is a crucial regulator of heart and vessel formation and integrity. May act through the stabilization of endothelial cell junctions. This Homo sapiens (Human) protein is Protein HEG homolog 1 (HEG1).